Here is a 274-residue protein sequence, read N- to C-terminus: Kit ligand (274 aa).

The N-terminal stretch at 1–25 is a signal peptide; that stretch reads MKKTQTWIITCIYLQLLLFNPLVHS. Gln-26 is subject to Pyrrolidone carboxylic acid. The Extracellular segment spans residues 26–215; sequence QGICRNRVTD…SNSIEDSSLQ (190 aa). 2 disulfide bridges follow: Cys-29–Cys-114 and Cys-68–Cys-164. N-linked (GlcNAc...) asparagine glycans are attached at residues Asn-90, Asn-97, Asn-145, and Asn-196. A helical transmembrane segment spans residues 216–238; it reads WAAVALPAFFSLVIGFAFGALYW. Over 239–274 the chain is Cytoplasmic; it reads KKKQPNLTRTVENRQINEEDNEISMLQEKEREFQEV.

Belongs to the SCF family. In terms of assembly, homodimer, non-covalently linked. A soluble form is produced by proteolytic processing of the extracellular domain.

It localises to the cytoplasm. It is found in the cytoskeleton. The protein resides in the cell membrane. Its subcellular location is the cell projection. The protein localises to the lamellipodium. It localises to the filopodium. It is found in the secreted. Its function is as follows. Stimulates the proliferation of mast cells. Able to augment the proliferation of both myeloid and lymphoid hematopoietic progenitors in bone marrow culture. Also mediates cell-cell adhesion. Acts synergistically with other cytokines, probably interleukins. In Capra hircus (Goat), this protein is Kit ligand (KITLG).